Here is a 141-residue protein sequence, read N- to C-terminus: MAKKVANIVKLQIPAGKATPAPPVGPALGQAGINIMGFTKDFNARTADQAGMIIPVVITVYEDRSFDFVTKTPPAAVLLKKAAGVEHGSGEPNTKKVAKVTKDQVKEIAETKMQDLNAADVEAAMRMVEGTARSMGFEVEG.

This sequence belongs to the universal ribosomal protein uL11 family. As to quaternary structure, part of the ribosomal stalk of the 50S ribosomal subunit. Interacts with L10 and the large rRNA to form the base of the stalk. L10 forms an elongated spine to which L12 dimers bind in a sequential fashion forming a multimeric L10(L12)X complex. Post-translationally, one or more lysine residues are methylated.

In terms of biological role, forms part of the ribosomal stalk which helps the ribosome interact with GTP-bound translation factors. The polypeptide is Large ribosomal subunit protein uL11 (Lacticaseibacillus casei (strain BL23) (Lactobacillus casei)).